Reading from the N-terminus, the 410-residue chain is Lissencephaly-1 homolog A (410 aa).

Positions 7-39 (QRDELNRAIADYLRSNGYEEAYSVFKKEAELDM) constitute a LisH domain. Residues 56–83 (TSVIRLQKKVMELESKLNEAKEEINIGG) are a coiled coil. 7 WD repeats span residues 106–145 (GHRS…FERT), 148–187 (GHTD…CIRT), 190–229 (GHDH…CVKT), 232–271 (GHRE…CKAE), 274–333 (EHEH…CLMT), 336–375 (GHDN…CTKT), and 378–410 (AHEH…WECR).

This sequence belongs to the WD repeat LIS1/nudF family. As to quaternary structure, can self-associate. Component of the cytosolic PAF-AH (I) heterotetrameric enzyme, which is composed of PAFAH1B1 (beta), PAFAH1B2 (alpha2) and PAFAH1B3 (alpha1) subunits. The catalytic activity of the enzyme resides in the alpha1 (PAFAH1B3) and alpha2 (PAFAH1B2) subunits, whereas the beta subunit (PAFAH1B1) has regulatory activity. Trimer formation is not essential for the catalytic activity. Interacts with dynein, dynactin, nde1 and ndel1.

The protein localises to the cytoplasm. It localises to the cytoskeleton. The protein resides in the microtubule organizing center. It is found in the centrosome. Functionally, regulatory subunit (beta subunit) of the cytosolic type I platelet-activating factor (PAF) acetylhydrolase (PAF-AH (I)), an enzyme that catalyzes the hydrolyze of the acetyl group at the sn-2 position of PAF and its analogs and participates in PAF inactivation. Regulates the PAF-AH (I) activity in a catalytic dimer composition-dependent manner. Positively regulates the activity of the minus-end directed microtubule motor protein dynein. May enhance dynein-mediated microtubule sliding by targeting dynein to the microtubule plus end. Required for several dynein- and microtubule-dependent processes such as the maintenance of Golgi integrity, the peripheral transport of microtubule fragments and the coupling of the nucleus and centrosome. May be required for proliferation of neuronal precursors and neuronal migration. The sequence is that of Lissencephaly-1 homolog A (pafah1b1a) from Danio rerio (Zebrafish).